A 101-amino-acid polypeptide reads, in one-letter code: Interleukin-8 (101 aa).

The N-terminal stretch at M1–A22 is a signal peptide. Residue R27 is modified to Citrulline. 2 cysteine pairs are disulfide-bonded: C34-C61 and C36-C77.

It belongs to the intercrine alpha (chemokine CxC) family. As to quaternary structure, homodimer. Interacts with TNFAIP6 (via Link domain); this interaction interferes with chemokine binding to glycosaminoglycans. In terms of processing, citrullination at Arg-27 prevents proteolysis, and dampens tissue inflammation, it also enhances leukocytosis, possibly through impaired chemokine clearance from the blood circulation.

It localises to the secreted. Its function is as follows. Chemotactic factor that mediates inflammatory response by attracting neutrophils, basophils, and T-cells to clear pathogens and protect the host from infection. Also plays an important role in neutrophil activation. Released in response to an inflammatory stimulus, exerts its effect by binding to the G-protein-coupled receptors CXCR1 and CXCR2, primarily found in neutrophils, monocytes and endothelial cells. G-protein heterotrimer (alpha, beta, gamma subunits) constitutively binds to CXCR1/CXCR2 receptor and activation by IL8 leads to beta and gamma subunits release from Galpha (GNAI2 in neutrophils) and activation of several downstream signaling pathways including PI3K and MAPK pathways. The chain is Interleukin-8 (CXCL8) from Oryctolagus cuniculus (Rabbit).